Here is a 157-residue protein sequence, read N- to C-terminus: Ribonuclease H (157 aa).

Residues Met-1–Ala-146 enclose the RNase H type-1 domain. 4 residues coordinate Mg(2+): Asp-9, Glu-52, Asp-74, and Asp-138.

This sequence belongs to the RNase H family. Monomer. The cofactor is Mg(2+).

The protein resides in the cytoplasm. It catalyses the reaction Endonucleolytic cleavage to 5'-phosphomonoester.. Endonuclease that specifically degrades the RNA of RNA-DNA hybrids. The polypeptide is Ribonuclease H (Dinoroseobacter shibae (strain DSM 16493 / NCIMB 14021 / DFL 12)).